We begin with the raw amino-acid sequence, 86 residues long: Small ribosomal subunit protein uS17 (86 aa).

It belongs to the universal ribosomal protein uS17 family. In terms of assembly, part of the 30S ribosomal subunit.

In terms of biological role, one of the primary rRNA binding proteins, it binds specifically to the 5'-end of 16S ribosomal RNA. This chain is Small ribosomal subunit protein uS17, found in Desulfotalea psychrophila (strain LSv54 / DSM 12343).